The chain runs to 729 residues: Fatty acid oxidation complex subunit alpha (729 aa).

The tract at residues 1–189 (MLYKGDTLYL…KIGLVDGVVK (189 aa)) is enoyl-CoA hydratase/isomerase. Position 296 (aspartate 296) interacts with substrate. A 3-hydroxyacyl-CoA dehydrogenase region spans residues 311–729 (ETPKQAAVLG…ARPVGSLKTA (419 aa)). Residues methionine 324, aspartate 343, 400-402 (VVE), lysine 407, and serine 429 each bind NAD(+). Histidine 450 (for 3-hydroxyacyl-CoA dehydrogenase activity) is an active-site residue. Position 453 (asparagine 453) interacts with NAD(+). Substrate-binding residues include asparagine 500 and tyrosine 660. Positions 708-729 (RHNEPYYPPVEPARPVGSLKTA) are disordered.

This sequence in the N-terminal section; belongs to the enoyl-CoA hydratase/isomerase family. In the C-terminal section; belongs to the 3-hydroxyacyl-CoA dehydrogenase family. In terms of assembly, heterotetramer of two alpha chains (FadB) and two beta chains (FadA).

It catalyses the reaction a (3S)-3-hydroxyacyl-CoA + NAD(+) = a 3-oxoacyl-CoA + NADH + H(+). The enzyme catalyses a (3S)-3-hydroxyacyl-CoA = a (2E)-enoyl-CoA + H2O. It carries out the reaction a 4-saturated-(3S)-3-hydroxyacyl-CoA = a (3E)-enoyl-CoA + H2O. The catalysed reaction is (3S)-3-hydroxybutanoyl-CoA = (3R)-3-hydroxybutanoyl-CoA. It catalyses the reaction a (3Z)-enoyl-CoA = a 4-saturated (2E)-enoyl-CoA. The enzyme catalyses a (3E)-enoyl-CoA = a 4-saturated (2E)-enoyl-CoA. Its pathway is lipid metabolism; fatty acid beta-oxidation. In terms of biological role, involved in the aerobic and anaerobic degradation of long-chain fatty acids via beta-oxidation cycle. Catalyzes the formation of 3-oxoacyl-CoA from enoyl-CoA via L-3-hydroxyacyl-CoA. It can also use D-3-hydroxyacyl-CoA and cis-3-enoyl-CoA as substrate. The protein is Fatty acid oxidation complex subunit alpha of Salmonella enteritidis PT4 (strain P125109).